Consider the following 122-residue polypeptide: Ig heavy chain V region M511 (122 aa).

Residues E1–A114 form the Ig-like domain.

This is Ig heavy chain V region M511 from Mus musculus (Mouse).